A 427-amino-acid polypeptide reads, in one-letter code: Methylthioribose kinase 2 (427 aa).

ATP-binding positions include D49 to N53, K68, and R122 to I124. N51 is a binding site for substrate. D243 is a binding site for substrate. D260 to E262 contributes to the ATP binding site. Position 370 (R370) interacts with substrate.

This sequence belongs to the methylthioribose kinase family. As to quaternary structure, homodimer.

It catalyses the reaction 5-(methylsulfanyl)-D-ribose + ATP = 5-(methylsulfanyl)-alpha-D-ribose 1-phosphate + ADP + H(+). It participates in amino-acid biosynthesis; L-methionine biosynthesis via salvage pathway; S-methyl-5-thio-alpha-D-ribose 1-phosphate from S-methyl-5'-thioadenosine (hydrolase route): step 2/2. In terms of biological role, catalyzes the phosphorylation of methylthioribose into methylthioribose-1-phosphate. In Oryza sativa subsp. japonica (Rice), this protein is Methylthioribose kinase 2 (MTK2).